The sequence spans 110 residues: UPF0145 protein MTH_507 (110 aa).

This sequence belongs to the UPF0145 family.

The protein is UPF0145 protein MTH_507 of Methanothermobacter thermautotrophicus (strain ATCC 29096 / DSM 1053 / JCM 10044 / NBRC 100330 / Delta H) (Methanobacterium thermoautotrophicum).